We begin with the raw amino-acid sequence, 187 residues long: Peptidyl-tRNA hydrolase (187 aa).

Tyr16 is a binding site for tRNA. His21 acts as the Proton acceptor in catalysis. Residues Tyr66, Asn68, and Asn114 each coordinate tRNA.

It belongs to the PTH family. Monomer.

It is found in the cytoplasm. It carries out the reaction an N-acyl-L-alpha-aminoacyl-tRNA + H2O = an N-acyl-L-amino acid + a tRNA + H(+). Its function is as follows. Hydrolyzes ribosome-free peptidyl-tRNAs (with 1 or more amino acids incorporated), which drop off the ribosome during protein synthesis, or as a result of ribosome stalling. Functionally, catalyzes the release of premature peptidyl moieties from peptidyl-tRNA molecules trapped in stalled 50S ribosomal subunits, and thus maintains levels of free tRNAs and 50S ribosomes. The sequence is that of Peptidyl-tRNA hydrolase from Malacoplasma penetrans (strain HF-2) (Mycoplasma penetrans).